The following is a 768-amino-acid chain: MSRKVTKYSAVLAVSLFAAALAGCGSENKEGTVGTGPGGVATVGDTACVQCHSAVVDPLTGESIITQYTRSFHYSKGVGCEGCHGGGAQHNGVGPLPFPLAGQSEAQIAARCASCHNGVIAPLSSSPNFVNGNHANPFGGEEAKENLCSRCHSHEGAIFGAQAGFTGDGNILRNAAYQPVYPQDPETFNVMTCATCHQHGGAQRQVFTQISTAGVPNSRRTVAWDPNRNSINDQYDLCTSCHTVNTMTGTLIGSGNVLQIFTSNAVGSGTKSVTTAPFYHNTRWFRTLPSTHYDFPESKTTASGTTIEGYVIRRNTANPCFDCHGHEFQTNTRRLAGADRPNTIFLDWGQSAHGGKLLQAKVAAAALASSGAAEVDDVMKAGATDATAPGWTHYNWDDTASRGACQRCHTSTGASNFLNNPAGYDRTGAGNSFTHLAGWTSSNKRSDQNELLYCWGCHTKAGTGELRNPGAITEVYPGINSTSTGTTGLDVTVSYPDIKGSNVCMGCHLGREVGDNIKAITDADGILGFVNSHYLTAGGQLFGTTGYEYATRSYANPAFFQHDKIGTAAAPGTGTNGPCAGCHMTTPTSHLFLPVTKDGTGAITAITSTACVTCHAGTFALTPEGLTAEEEEYVASLEALKAALAGKGILFFNAHPYFYRDTNANGIADPGETVSSNAFTNWAGVYGLALWQDVMGAAFNANLLIHDPGGYAHNRFYSKRLIWDSIDFIFDGVLNNDVTAAIDAQVTAARLDSATATAAKAYLGATRP.

The signal sequence occupies residues 1-23; that stretch reads MSRKVTKYSAVLAVSLFAAALAG. The N-palmitoyl cysteine moiety is linked to residue C24. C24 carries the S-diacylglycerol cysteine lipid modification. Residues C48, C51, H52, C80, C83, H84, C112, C115, H116, C148, C151, H152, C193, C196, H197, C238, C241, H242, C320, C323, H324, C405, C408, H409, C454, C457, H458, C504, C507, H508, C579, C582, H583, C611, C614, and H615 each coordinate heme c.

In terms of processing, binds 12 heme c groups per subunit.

It is found in the cell outer membrane. In terms of biological role, not involved in Fe(3+) reduction. This Geobacter sulfurreducens (strain ATCC 51573 / DSM 12127 / PCA) protein is C-type polyheme cytochrome OmcC (omcC).